Reading from the N-terminus, the 275-residue chain is MSQQLQQIIDNAWENRAELSPKAASAEIREAVAHAIEQLDRGALRVAEKIDGAWTVHQWLKKAVLLSFRLEDNAPMPAGGYSQFYDKVPSKFANYTAEDFAAGGFRVVPPAIARRGSFIAKNVVLMPSYTNIGAYVDEGTMVDTWATVGSCAQIGKNVHLSGGVGIGGVLEPLQANPVIIEDNCFIGARSEVVEGVIVEENSVISMGVYLGQSTKIYDRETGEVTYGRIPAGSVVVAGNLPAKDGTHSLYCAVIVKKVDAKTRAKVGLNELLRGD.

Residues R106 and D143 each contribute to the substrate site.

This sequence belongs to the transferase hexapeptide repeat family. In terms of assembly, homotrimer.

It localises to the cytoplasm. The catalysed reaction is (S)-2,3,4,5-tetrahydrodipicolinate + succinyl-CoA + H2O = (S)-2-succinylamino-6-oxoheptanedioate + CoA. Its pathway is amino-acid biosynthesis; L-lysine biosynthesis via DAP pathway; LL-2,6-diaminopimelate from (S)-tetrahydrodipicolinate (succinylase route): step 1/3. In Burkholderia mallei (strain NCTC 10247), this protein is 2,3,4,5-tetrahydropyridine-2,6-dicarboxylate N-succinyltransferase.